Consider the following 147-residue polypeptide: Hemoglobin subunit beta (147 aa).

Valine 2 is modified (N-acetylvaline). Residues 3–147 (HLTGEEKAAV…VANALAHKYH (145 aa)) enclose the Globin domain. At threonine 13 the chain carries Phosphothreonine. The residue at position 45 (serine 45) is a Phosphoserine. Lysine 60 is modified (N6-acetyllysine). Histidine 64 provides a ligand contact to heme b. Lysine 83 is subject to N6-acetyllysine. Histidine 93 is a heme b binding site. Cysteine 94 bears the S-nitrosocysteine mark. The residue at position 145 (lysine 145) is an N6-acetyllysine.

The protein belongs to the globin family. Heterotetramer of two alpha chains and two beta chains. Red blood cells.

Involved in oxygen transport from the lung to the various peripheral tissues. This chain is Hemoglobin subunit beta (HBB), found in Ateles belzebuth (White-bellied spider monkey).